The chain runs to 164 residues: Interferon gamma (164 aa).

A signal peptide spans 1–19; that stretch reads MTCQTYNLFVLSVIMIYYG. N-linked (GlcNAc...) asparagine glycans are attached at residues Asn42 and Asn61.

The protein belongs to the type II (or gamma) interferon family. As to quaternary structure, homodimer.

It localises to the secreted. Produced by lymphocytes activated by specific antigens or mitogens. IFN-gamma, in addition to having antiviral activity, has important immunoregulatory functions. It is a potent activator of macrophages, it has antiproliferative effects on transformed cells and it can potentiate the antiviral and antitumor effects of the type I interferons. The chain is Interferon gamma (IFNG) from Numida meleagris (Helmeted guineafowl).